The sequence spans 416 residues: Putative pseudouridine transporter (416 aa).

Residues 1–2 (MD) are Periplasmic-facing. A helical membrane pass occupies residues 3-23 (IMRSVVGMVVLLAIAFLLSVN). Residues 24–31 (KKSISLRT) are Cytoplasmic-facing. A helical membrane pass occupies residues 32-52 (VGAALLLQIAIGGIMLYFPPG). Residues 53–104 (KWAVEQAALGVHKVMSYSDAGSAFIFGSLVGPKMDVLFDGAGFIFAFRVLPA) lie on the Periplasmic side of the membrane. The chain crosses the membrane as a helical span at residues 105-125 (IIFVTALISLLYYIGVMGLLI). Topologically, residues 126–172 (RILGSIFQKALNISKIESFVAVTTIFLGQNEIPAIVKPFIDRMNRNE) are cytoplasmic. Residues 173–193 (LFTAICSGMASIAGSMMIGYA) traverse the membrane as a helical segment. Residues 194-196 (GMG) are Periplasmic-facing. The chain crosses the membrane as a helical span at residues 197–217 (VPIDYLLAASLMAIPGGILFA). Residues 218–268 (RILSPATEPSQVTFENLSFSETPPKSFIEAAASGAMTGLKIAAGVATVVMA) are Cytoplasmic-facing. A helical membrane pass occupies residues 269-289 (FVAIIALINGIIGGIGGWFGF). Over 290 to 352 (ANASLESIFG…QTGGTLEVKT (63 aa)) the chain is Periplasmic. Residues 353–373 (IAIISFALCGFANFGSIGVVV) form a helical membrane-spanning segment. At 374–394 (GAFSAISPKRAPEIAQLGLRA) the chain is on the cytoplasmic side. Residues 395–415 (LAAATLSNLMSATIAGFFIGL) traverse the membrane as a helical segment. A topological domain (periplasmic) is located at residue A416.

This sequence belongs to the concentrative nucleoside transporter (CNT) (TC 2.A.41) family.

It localises to the cell inner membrane. Functionally, could be involved in pseudouridine transport. This chain is Putative pseudouridine transporter (psuT), found in Escherichia coli (strain K12).